The sequence spans 231 residues: 2-C-methyl-D-erythritol 4-phosphate cytidylyltransferase (231 aa).

This sequence belongs to the IspD/TarI cytidylyltransferase family. IspD subfamily.

The enzyme catalyses 2-C-methyl-D-erythritol 4-phosphate + CTP + H(+) = 4-CDP-2-C-methyl-D-erythritol + diphosphate. It participates in isoprenoid biosynthesis; isopentenyl diphosphate biosynthesis via DXP pathway; isopentenyl diphosphate from 1-deoxy-D-xylulose 5-phosphate: step 2/6. Functionally, catalyzes the formation of 4-diphosphocytidyl-2-C-methyl-D-erythritol from CTP and 2-C-methyl-D-erythritol 4-phosphate (MEP). The chain is 2-C-methyl-D-erythritol 4-phosphate cytidylyltransferase from Clostridium novyi (strain NT).